The sequence spans 108 residues: Peptidyl-prolyl cis-trans isomerase FKBP1B (108 aa).

Residues 20 to 108 enclose the PPIase FKBP-type domain; the sequence is GQICVVHYTG…IFDVELLSLE (89 aa).

It belongs to the FKBP-type PPIase family. FKBP1 subfamily. In terms of assembly, identified in a complex composed of RYR2, FKBP1B, PKA catalytic subunit, PRKAR2A, AKAP6, and the protein phosphatases PP2A and PP1. Interacts directly with RYR2.

Its subcellular location is the cytoplasm. It localises to the sarcoplasmic reticulum. The enzyme catalyses [protein]-peptidylproline (omega=180) = [protein]-peptidylproline (omega=0). Inhibited by both FK506 and rapamycin. Its function is as follows. Has the potential to contribute to the immunosuppressive and toxic effects of FK506 and rapamycin. PPIases accelerate the folding of proteins. It catalyzes the cis-trans isomerization of proline imidic peptide bonds in oligopeptides. In Mus musculus (Mouse), this protein is Peptidyl-prolyl cis-trans isomerase FKBP1B (Fkbp1b).